Reading from the N-terminus, the 58-residue chain is Amyloid-beta precursor protein (58 aa).

Topologically, residues 1–34 are extracellular; that stretch reads ISEVKMDAEFRHDSGYEVHHQKLVFFAEDVGSNK. Positions 12, 16, 19, and 20 each coordinate Cu(2+). Positions 12, 16, 19, and 20 each coordinate Zn(2+). The helical transmembrane segment at 35-58 threads the bilayer; that stretch reads GAIIGLMVGGVVIATVIVITLVML.

This sequence belongs to the APP family. As to quaternary structure, binds, via its C-terminus, to the PID domain of several cytoplasmic proteins, including APBB family members, the APBA family, MAPK8IP1, SHC1 and NUMB and DAB1. Binding to DAB1 inhibits its serine phosphorylation. Interacts (via NPXY motif) with DAB2 (via PID domain); the interaction is impaired by tyrosine phosphorylation of the NPXY motif. Also interacts with GPCR-like protein BPP, APPBP1, IB1, KNS2 (via its TPR domains), APPBP2 (via BaSS) and DDB1. In vitro, it binds MAPT via the MT-binding domains. Associates with microtubules in the presence of ATP and in a kinesin-dependent manner. Interacts, through a C-terminal domain, with GNAO1. Interacts with CPEB1, ANKS1B and AGER. Interacts with ITM2B. Interacts with ITM2C. Interacts with IDE. Can form homodimers; dimerization is enhanced in the presence of Cu(2+) ions. Can form homodimers; this is promoted by heparin binding. Interacts with SORL1 (via N-terminal ectodomain); this interaction retains APP in the trans-Golgi network and reduces processing into soluble APP-alpha and amyloid-beta peptides. Interacts with PLD3. Interacts with VDAC1. Interacts with NSG1; could regulate APP processing. Amyloid-beta protein 42 interacts with FPR2. Interacts with LRRK2. Interacts (via cytoplasmic domain) with KIF5B. Interacts (via C-terminus) with APBB2/FE65L1 (via C-terminus). Interacts (via intracellular domain) with APBB3. Proteolytically processed under normal cellular conditions. Cleavage either by alpha-secretase, beta-secretase or theta-secretase leads to generation and extracellular release of soluble APP peptides, S-APP-alpha and S-APP-beta, and the retention of corresponding membrane-anchored C-terminal fragments, C80, C83 and C99. Subsequent processing of C80 and C83 by gamma-secretase yields P3 peptides. This is the major secretory pathway and is non-amyloidogenic. Alternatively, presenilin/nicastrin-mediated gamma-secretase processing of C99 releases the amyloid-beta proteins, amyloid-beta protein 40 and amyloid-beta protein 42, major components of amyloid plaques, and the cytotoxic C-terminal fragments, gamma-CTF(50), gamma-CTF(57) and gamma-CTF(59). PSEN1 cleavage is more efficient with C83 than with C99 as substrate (in vitro). Amyloid-beta protein 40 and Amyloid-beta protein 42 are cleaved by ACE. Many other minor amyloid-beta peptides, amyloid-beta 1-X peptides, are found in cerebral spinal fluid (CSF) including the amyloid-beta X-15 peptides, produced from the cleavage by alpha-secretase.

Its subcellular location is the cell membrane. It is found in the membrane. The protein resides in the perikaryon. The protein localises to the cell projection. It localises to the growth cone. Its subcellular location is the clathrin-coated pit. It is found in the early endosome. The protein resides in the cytoplasmic vesicle. The protein localises to the secreted. It localises to the cell surface. Its subcellular location is the nucleus. It is found in the cytoplasm. In terms of biological role, functions as a cell surface receptor and performs physiological functions on the surface of neurons relevant to neurite growth, neuronal adhesion and axonogenesis. Interaction between APP molecules on neighboring cells promotes synaptogenesis. Involved in cell mobility and transcription regulation through protein-protein interactions. Can promote transcription activation through binding to APBB1-KAT5 and inhibit Notch signaling through interaction with Numb. Couples to apoptosis-inducing pathways such as those mediated by G(o) and JIP. Inhibits G(o)-alpha ATPase activity. Acts as a kinesin I membrane receptor, mediating the axonal transport of beta-secretase and presenilin 1. By acting as a kinesin I membrane receptor, plays a role in axonal anterograde transport of cargo towards synapses in axons. May be involved in copper homeostasis/oxidative stress through copper ion reduction. In vitro, copper-metallated APP induces neuronal death directly or is potentiated through Cu(2+)-mediated low-density lipoprotein oxidation. Can regulate neurite outgrowth through binding to components of the extracellular matrix such as heparin and collagen I and IV. Induces a AGER-dependent pathway that involves activation of p38 MAPK, resulting in internalization of amyloid-beta peptide and mitochondrial dysfunction in cultured cortical neurons. Provides Cu(2+) ions for GPC1 which are required for release of nitric oxide (NO) and subsequent degradation of the heparan sulfate chains on GPC1. The polypeptide is Amyloid-beta precursor protein (APP) (Canis lupus familiaris (Dog)).